A 315-amino-acid polypeptide reads, in one-letter code: Ankyrin repeat domain-containing protein SOWAHD (315 aa).

Residues 1–39 (MAQLGGAANRAPTASLAPTSQSLRCAPQPRPSRADTGSL) form a disordered region. ANK repeat units lie at residues 112 to 141 (PREHAWILAAAEGRYEVLRELLEAEPELLL), 147 to 162 (TGYSVLHWLAKHGRHE), and 186 to 216 (GGLTPLHLAALQGHDMVIKVLVGALGADATR).

The protein belongs to the SOWAH family.

The sequence is that of Ankyrin repeat domain-containing protein SOWAHD (SOWAHD) from Homo sapiens (Human).